The following is a 134-amino-acid chain: Large-conductance mechanosensitive channel (134 aa).

Helical transmembrane passes span 16 to 36 (VIDL…VTAL) and 81 to 101 (GDFI…FIIV).

This sequence belongs to the MscL family. In terms of assembly, homopentamer.

It localises to the cell inner membrane. Channel that opens in response to stretch forces in the membrane lipid bilayer. May participate in the regulation of osmotic pressure changes within the cell. The protein is Large-conductance mechanosensitive channel of Xylella fastidiosa (strain Temecula1 / ATCC 700964).